A 157-amino-acid chain; its full sequence is MPRRREVPKREILPDPKFGDVDLAKFMNVIMQGGKKAVAERIIYGALDFIEKKNPGKDPLEAFHMAIGNIKPMVEVKSRRVGGANYQVPVEVRPVRRMALAMRWLKEAAKKRGEKSMSLRLANELMEATEGRGGAMKKRDEVHRMAEANKAFSHFRF.

Belongs to the universal ribosomal protein uS7 family. In terms of assembly, part of the 30S ribosomal subunit. Contacts proteins S9 and S11.

Functionally, one of the primary rRNA binding proteins, it binds directly to 16S rRNA where it nucleates assembly of the head domain of the 30S subunit. Is located at the subunit interface close to the decoding center, probably blocks exit of the E-site tRNA. This is Small ribosomal subunit protein uS7 from Polaromonas sp. (strain JS666 / ATCC BAA-500).